A 706-amino-acid polypeptide reads, in one-letter code: Signal transducer and activator of transcription 1 (706 aa).

The SH2 domain occupies 477–574 (WCIGFISKND…EEMLRFFESE (98 aa)).

The protein belongs to the transcription factor STAT family. As to quaternary structure, forms a homodimer or a heterodimer with a related family member. In terms of tissue distribution, expressed in adult and larval pharynx, head ganglia, tail ganglia, ventral nerve cord and body muscles.

Its subcellular location is the cytoplasm. The protein localises to the nucleus. In terms of biological role, carries out a dual function: signal transduction and activation of transcription. Activated STAT proteins play a role in repression of dauer formation. Neuronal expression is held in check by negative signals through the TGF-beta pathway that target the daf-3 transcription factor. The polypeptide is Signal transducer and activator of transcription 1 (Caenorhabditis elegans).